We begin with the raw amino-acid sequence, 272 residues long: 1,4-dihydroxy-2-naphthoyl-CoA synthase (272 aa).

Residues Arg-33, 72-76 (SGGDQ), Tyr-84, 116-120 (YAIGG), Thr-142, Ser-148, Tyr-245, and Lys-260 contribute to the substrate site. 141-143 (QTG) serves as a coordination point for hydrogencarbonate.

Belongs to the enoyl-CoA hydratase/isomerase family. MenB subfamily. Requires hydrogencarbonate as cofactor.

It carries out the reaction 2-succinylbenzoyl-CoA + H(+) = 1,4-dihydroxy-2-naphthoyl-CoA + H2O. The protein operates within quinol/quinone metabolism; 1,4-dihydroxy-2-naphthoate biosynthesis; 1,4-dihydroxy-2-naphthoate from chorismate: step 6/7. Its pathway is quinol/quinone metabolism; menaquinone biosynthesis. Its function is as follows. Converts o-succinylbenzoyl-CoA (OSB-CoA) to 1,4-dihydroxy-2-naphthoyl-CoA (DHNA-CoA). This Staphylococcus epidermidis (strain ATCC 35984 / DSM 28319 / BCRC 17069 / CCUG 31568 / BM 3577 / RP62A) protein is 1,4-dihydroxy-2-naphthoyl-CoA synthase.